Reading from the N-terminus, the 355-residue chain is Probable aldo-keto reductase 3 (355 aa).

The active-site Proton donor is Tyr70. His138 lines the substrate pocket. 217 to 227 (SPLGRGFFSSG) contributes to the NADP(+) binding site.

This sequence belongs to the aldo/keto reductase family.

The chain is Probable aldo-keto reductase 3 from Oryza sativa subsp. indica (Rice).